The primary structure comprises 251 residues: Imidazole glycerol phosphate synthase subunit HisF (251 aa).

Residues aspartate 11 and aspartate 130 contribute to the active site.

Belongs to the HisA/HisF family. As to quaternary structure, heterodimer of HisH and HisF.

Its subcellular location is the cytoplasm. The enzyme catalyses 5-[(5-phospho-1-deoxy-D-ribulos-1-ylimino)methylamino]-1-(5-phospho-beta-D-ribosyl)imidazole-4-carboxamide + L-glutamine = D-erythro-1-(imidazol-4-yl)glycerol 3-phosphate + 5-amino-1-(5-phospho-beta-D-ribosyl)imidazole-4-carboxamide + L-glutamate + H(+). The protein operates within amino-acid biosynthesis; L-histidine biosynthesis; L-histidine from 5-phospho-alpha-D-ribose 1-diphosphate: step 5/9. Its function is as follows. IGPS catalyzes the conversion of PRFAR and glutamine to IGP, AICAR and glutamate. The HisF subunit catalyzes the cyclization activity that produces IGP and AICAR from PRFAR using the ammonia provided by the HisH subunit. This is Imidazole glycerol phosphate synthase subunit HisF from Streptococcus mutans serotype c (strain ATCC 700610 / UA159).